The sequence spans 50 residues: Large ribosomal subunit protein bL33B (50 aa).

This sequence belongs to the bacterial ribosomal protein bL33 family.

This Enterococcus faecalis (strain ATCC 700802 / V583) protein is Large ribosomal subunit protein bL33B (rpmG2).